Reading from the N-terminus, the 185-residue chain is FK506-binding protein 2 (185 aa).

The N-terminal stretch at 1-20 is a signal peptide; it reads MQGLLLSLSLLASAAVGVLA. The region spanning 41 to 129 is the PPIase FKBP-type domain; the sequence is GDKINVHYKG…VFETELVGIE (89 aa). A Prevents secretion from ER motif is present at residues 182 to 185; that stretch reads HNEL.

Belongs to the FKBP-type PPIase family. FKBP2 subfamily.

Its subcellular location is the endoplasmic reticulum. It catalyses the reaction [protein]-peptidylproline (omega=180) = [protein]-peptidylproline (omega=0). Its activity is regulated as follows. Inhibited by both FK506 and rapamycin. Its function is as follows. PPIases accelerate the folding of proteins. It catalyzes the cis-trans isomerization of proline imidic peptide bonds in oligopeptides. In Podospora anserina (Pleurage anserina), this protein is FK506-binding protein 2 (FPR2).